The following is a 322-amino-acid chain: Stage V sporulation protein K (322 aa).

99 to 106 (GNPGTGKT) provides a ligand contact to ATP.

The protein belongs to the CbxX/CfxQ family.

This chain is Stage V sporulation protein K (spoVK), found in Bacillus subtilis (strain 168).